A 552-amino-acid polypeptide reads, in one-letter code: Non-structural protein NS1 (552 aa).

The protein belongs to the orbivirus non-structural protein NS1 family.

This chain is Non-structural protein NS1 (Segment-5), found in Antilocapra americana (Pronghorn).